The following is a 281-amino-acid chain: sn-glycerol-3-phosphate transport system permease protein UgpE (281 aa).

Helical transmembrane passes span 16-36 (LILG…AATL), 85-105 (FSIT…IVWF), 113-133 (FFWM…FPTV), 142-162 (LDSY…TFLF), 202-222 (ALFV…LLII), and 247-267 (WNSV…IVLV). One can recognise an ABC transmembrane type-1 domain in the interval 77–268 (LLNSFVMAFS…IPPVVIVLVM (192 aa)).

The protein belongs to the binding-protein-dependent transport system permease family. UgpAE subfamily. As to quaternary structure, the complex is composed of two ATP-binding proteins (UgpC), two transmembrane proteins (UgpA and UgpE) and a solute-binding protein (UgpB).

The protein localises to the cell inner membrane. Its function is as follows. Part of the ABC transporter complex UgpBAEC involved in sn-glycerol-3-phosphate (G3P) import. Probably responsible for the translocation of the substrate across the membrane. The protein is sn-glycerol-3-phosphate transport system permease protein UgpE (ugpE) of Escherichia coli O6:K15:H31 (strain 536 / UPEC).